The sequence spans 212 residues: Ribosomal RNA small subunit methyltransferase G (212 aa).

Residues Gly-76, Met-81, 127 to 128 (VE), and Arg-145 contribute to the S-adenosyl-L-methionine site.

Belongs to the methyltransferase superfamily. RNA methyltransferase RsmG family.

Its subcellular location is the cytoplasm. The enzyme catalyses guanosine(527) in 16S rRNA + S-adenosyl-L-methionine = N(7)-methylguanosine(527) in 16S rRNA + S-adenosyl-L-homocysteine. Its function is as follows. Specifically methylates the N7 position of guanine in position 527 of 16S rRNA. This chain is Ribosomal RNA small subunit methyltransferase G, found in Acinetobacter baylyi (strain ATCC 33305 / BD413 / ADP1).